Here is a 450-residue protein sequence, read N- to C-terminus: Phosphoglucosamine mutase (450 aa).

The active-site Phosphoserine intermediate is S102. Residues S102, D243, D245, and D247 each coordinate Mg(2+). Position 102 is a phosphoserine (S102).

It belongs to the phosphohexose mutase family. Mg(2+) serves as cofactor. Post-translationally, activated by phosphorylation.

It catalyses the reaction alpha-D-glucosamine 1-phosphate = D-glucosamine 6-phosphate. Functionally, catalyzes the conversion of glucosamine-6-phosphate to glucosamine-1-phosphate. This chain is Phosphoglucosamine mutase, found in Rhizobium meliloti (strain 1021) (Ensifer meliloti).